Reading from the N-terminus, the 774-residue chain is 5-methyltetrahydropteroyltriglutamate--homocysteine methyltransferase (774 aa).

Residues 23–26 and Lys123 contribute to the 5-methyltetrahydropteroyltri-L-glutamate site; that span reads RELK. L-homocysteine-binding positions include 446 to 448 and Glu499; that span reads IGS. Residues 446-448 and Glu499 each bind L-methionine; that span reads IGS. 5-methyltetrahydropteroyltri-L-glutamate is bound by residues 530 to 531 and Trp576; that span reads RC. Residue Asp614 coordinates L-homocysteine. Asp614 provides a ligand contact to L-methionine. Residue Glu620 coordinates 5-methyltetrahydropteroyltri-L-glutamate. Residues His656, Cys658, and Glu680 each contribute to the Zn(2+) site. The active-site Proton donor is the His709. Cys741 contacts Zn(2+).

The protein belongs to the vitamin-B12 independent methionine synthase family. It depends on Zn(2+) as a cofactor.

It catalyses the reaction 5-methyltetrahydropteroyltri-L-glutamate + L-homocysteine = tetrahydropteroyltri-L-glutamate + L-methionine. The protein operates within amino-acid biosynthesis; L-methionine biosynthesis via de novo pathway; L-methionine from L-homocysteine (MetE route): step 1/1. In terms of biological role, catalyzes the transfer of a methyl group from 5-methyltetrahydrofolate to homocysteine resulting in methionine formation. The polypeptide is 5-methyltetrahydropteroyltriglutamate--homocysteine methyltransferase (Aliivibrio fischeri (strain ATCC 700601 / ES114) (Vibrio fischeri)).